The following is a 445-amino-acid chain: StAR-related lipid transfer protein 3 (445 aa).

The Cytoplasmic segment spans residues 1-51 (MSKLPGELARDLECSLPAVASLGSSLSHSQSLSSHLLPPPEKRRAISDVRR). Residues 46-217 (ISDVRRTFCL…YSPPESFAGS (172 aa)) form the MENTAL domain. The helical transmembrane segment at 52-72 (TFCLFVTFDLLFISLLWIIEL) threads the bilayer. Residues 73–94 (NTNTGIRKNLEQEIIQYNFKTS) are Extracellular-facing. Residues 95-115 (FFDIFVLAFFRFSGLLLGYAV) traverse the membrane as a helical segment. Residues 116–120 (LRLQH) lie on the Cytoplasmic side of the membrane. The chain crosses the membrane as a helical span at residues 121-141 (WWVIAVTTLVSSAFLIVKVIL). Residues 142 to 148 (SELLSKG) are Extracellular-facing. The helical transmembrane segment at 149 to 169 (AFGYLLPIVSFVLAWLETWFL) threads the bilayer. Topologically, residues 170 to 445 (DFKVLPQEAE…QRISELGARA (276 aa)) are cytoplasmic. 2 consecutive short sequence motifs (FFAT) follow at residues 206–212 (QFYSPPE) and 207–212 (FYSPPE). 3 positions are modified to phosphoserine: S209, S217, and S221. Positions 248 to 443 (VVDQILAQEE…LRQRISELGA (196 aa)) constitute an START domain.

It belongs to the STARD3 family. Homodimer. Interacts (via the MENTAL domain) with STARD3NL. Interacts (via phosphorylated FFAT motif) with VAPA (via MSP domain). Interacts (via phosphorylated FFAT motif) with VAPB (via MSP domain). Interacts (via phosphorylated FFAT motif) with MOSPD2 (via MSP domain); this interaction allows enrichment of MOSPD2 around endosomes. In terms of processing, phosphorylation at Ser-209 is necessary and sufficient for the direct interaction of the phosphorylated FFAT motif with the MSP domain of MOSPD2, VAPA and VAPB and allows the tethering of two membranes that participates in the formation of ER-endosome contacts. Phosphorylation of the FFAT motif leads to conformation changes. Additional phosphorylations around the core FFAT motif (QFYSPPE) are not essential but strengthen the interaction with MOSPD2, VAPA and VAPB. Phosphorylation at Ser-209 of FFAT motif drives membrane tethering between the endoplasmic reticulum and late endosomes via interaction with VAPA and VAPB that in turn allows the efficient transport of sterol mediated by the START domain. As to expression, present in retina. Localizes to all neurons of macular retina and especially cone inner segments and axons (at protein level).

Its subcellular location is the late endosome membrane. It carries out the reaction cholesterol(in) = cholesterol(out). Functionally, sterol-binding protein that mediates cholesterol transport from the endoplasmic reticulum to endosomes. The sterol transport mechanism is triggered by phosphorylation of FFAT motif that leads to membrane tethering between the endoplasmic reticulum and late endosomes via interaction with VAPA and VAPB. Acts as a lipid transfer protein that redirects sterol to the endosome at the expense of the cell membrane and favors membrane formation inside endosomes. May also mediate cholesterol transport between other membranes, such as mitochondria membrane or cell membrane. However, such results need additional experimental evidences; probably mainly mediates cholesterol transport from the endoplasmic reticulum to endosomes. Does not activate transcriptional cholesterol sensing. Able to bind other lipids, such as lutein, a xanthophyll carotenoids that form the macular pigment of the retina. Able to bind other lipids, such as lutein, a xanthophyll carotenoids that form the macular pigment of the retina. The chain is StAR-related lipid transfer protein 3 from Macaca mulatta (Rhesus macaque).